The chain runs to 362 residues: Acetylglutamate kinase (362 aa).

A compositionally biased stretch (pro residues) spans 1–11 (MNAPTRTPPPS). Positions 1 to 42 (MNAPTRTPPPSNGGHGSTGSTGSTGDAAPGGGTGRGPAATAR) are disordered. Substrate-binding positions include 106-107 (GG), arginine 128, and asparagine 227. A disordered region spans residues 329–362 (MAESGTSPEPGTPPAPAARPAGIVPAGEPTGGTP). Low complexity predominate over residues 346–355 (ARPAGIVPAG).

The protein belongs to the acetylglutamate kinase family. ArgB subfamily.

The protein resides in the cytoplasm. It catalyses the reaction N-acetyl-L-glutamate + ATP = N-acetyl-L-glutamyl 5-phosphate + ADP. It participates in amino-acid biosynthesis; L-arginine biosynthesis; N(2)-acetyl-L-ornithine from L-glutamate: step 2/4. Functionally, catalyzes the ATP-dependent phosphorylation of N-acetyl-L-glutamate. The protein is Acetylglutamate kinase of Frankia casuarinae (strain DSM 45818 / CECT 9043 / HFP020203 / CcI3).